Here is a 435-residue protein sequence, read N- to C-terminus: Glutamyl-tRNA reductase (435 aa).

Residues 50-53, Ser110, 115-117, and Gln121 each bind substrate; these read TCNR and ETQ. Cys51 (nucleophile) is an active-site residue. 189 to 194 contributes to the NADP(+) binding site; the sequence is GAGEMS.

The protein belongs to the glutamyl-tRNA reductase family. As to quaternary structure, homodimer.

It carries out the reaction (S)-4-amino-5-oxopentanoate + tRNA(Glu) + NADP(+) = L-glutamyl-tRNA(Glu) + NADPH + H(+). Its pathway is porphyrin-containing compound metabolism; protoporphyrin-IX biosynthesis; 5-aminolevulinate from L-glutamyl-tRNA(Glu): step 1/2. Its function is as follows. Catalyzes the NADPH-dependent reduction of glutamyl-tRNA(Glu) to glutamate 1-semialdehyde (GSA). The protein is Glutamyl-tRNA reductase of Campylobacter lari (strain RM2100 / D67 / ATCC BAA-1060).